The chain runs to 142 residues: Universal stress protein G (142 aa).

This sequence belongs to the universal stress protein A family.

The protein is Universal stress protein G (uspG) of Shigella flexneri.